The following is an 82-amino-acid chain: Large ribosomal subunit protein bL27 (82 aa).

Residues Met1–Arg20 are disordered.

This sequence belongs to the bacterial ribosomal protein bL27 family.

The polypeptide is Large ribosomal subunit protein bL27 (Neorickettsia sennetsu (strain ATCC VR-367 / Miyayama) (Ehrlichia sennetsu)).